The following is a 120-amino-acid chain: Large ribosomal subunit protein uL18 (120 aa).

It belongs to the universal ribosomal protein uL18 family. In terms of assembly, part of the 50S ribosomal subunit; part of the 5S rRNA/L5/L18/L25 subcomplex. Contacts the 5S and 23S rRNAs.

In terms of biological role, this is one of the proteins that bind and probably mediate the attachment of the 5S RNA into the large ribosomal subunit, where it forms part of the central protuberance. The protein is Large ribosomal subunit protein uL18 of Oleidesulfovibrio alaskensis (strain ATCC BAA-1058 / DSM 17464 / G20) (Desulfovibrio alaskensis).